The chain runs to 273 residues: NADPH-dependent 7-cyano-7-deazaguanine reductase (273 aa).

80-82 is a binding site for substrate; it reads VES. 82–83 contributes to the NADPH binding site; sequence SK. Cys180 acts as the Thioimide intermediate in catalysis. Asp187 acts as the Proton donor in catalysis. 219-220 is a binding site for substrate; that stretch reads HE. Residue 248 to 249 participates in NADPH binding; the sequence is RG.

It belongs to the GTP cyclohydrolase I family. QueF type 2 subfamily. As to quaternary structure, homodimer.

The protein resides in the cytoplasm. It catalyses the reaction 7-aminomethyl-7-carbaguanine + 2 NADP(+) = 7-cyano-7-deazaguanine + 2 NADPH + 3 H(+). It participates in tRNA modification; tRNA-queuosine biosynthesis. In terms of biological role, catalyzes the NADPH-dependent reduction of 7-cyano-7-deazaguanine (preQ0) to 7-aminomethyl-7-deazaguanine (preQ1). The polypeptide is NADPH-dependent 7-cyano-7-deazaguanine reductase (Bordetella pertussis (strain Tohama I / ATCC BAA-589 / NCTC 13251)).